Here is a 5541-residue protein sequence, read N- to C-terminus: Malpibaldin synthetase (5541 aa).

Residues 1-13 are compositionally biased toward basic and acidic residues; the sequence is MGDKRPDGIKSAE. The interval 1–26 is disordered; sequence MGDKRPDGIKSAESHGQPSAPFGAEN. Positions 137–378 are condensation 1; that stretch reads KEDDIARDES…IDIISPAEKT (242 aa). Residues 401–799 form an adenylation 1 region; it reads FEEQVDKSPD…GRNDDQVKIR (399 aa). Positions 901–975 constitute a Carrier 1 domain; the sequence is VPCGETEDAI…VLAQDLSKHQ (75 aa). S936 carries the post-translational modification O-(pantetheine 4'-phosphoryl)serine. A dual epimerase/condensation (E/C) domain 1 region spans residues 1021–1469; sequence QDVYSLAPLQ…LPLDERTKLL (449 aa). The segment at 1489 to 1899 is adenylation 2; sequence FEQQVKQSPI…GRNDDQIKIR (411 aa). The Carrier 2 domain occupies 2001-2075; sequence SPQGRIECAL…SFAQAFKGQL (75 aa). S2036 is modified (O-(pantetheine 4'-phosphoryl)serine). Positions 2095 to 2537 are condensation 2; that stretch reads ELSFSQQRLW…LGSTEEELLL (443 aa). The interval 2557–2956 is adenylation 3; it reads FEDQVERSPD…GRNDDQVKIR (400 aa). The Carrier 3 domain occupies 3058–3132; the sequence is EPQGEVEMKL…VLAASITRGC (75 aa). At S3093 the chain carries O-(pantetheine 4'-phosphoryl)serine. A dual epimerase/condensation (E/C) domain 2 region spans residues 3182-3616; it reads QDIYSLSPLQ…VIPAEEHDLL (435 aa). Positions 3637-4038 are adenylation 4; the sequence is FENQVRERPE…GRNDEQVKIR (402 aa). One can recognise a Carrier 4 domain in the interval 4140–4214; it reads APRGDIEISL…VLAASLNTHQ (75 aa). S4175 bears the O-(pantetheine 4'-phosphoryl)serine mark. Positions 4260-4695 are dual epimerase/condensation (E/C) domain 3; that stretch reads VQDVYSLSPL…VIPAEEHDLL (436 aa). Residues 4716–5117 are adenylation 5; that stretch reads FENQVRERPE…GRNDEQVKIR (402 aa). The Carrier 5 domain occupies 5219 to 5294; sequence LPSGDVEIGL…ELAQKLVQGG (76 aa). S5254 is modified (O-(pantetheine 4'-phosphoryl)serine). The interval 5315–5523 is thioesterase (TE) domain; sequence PLFCIHSGLG…VECTHIEMDK (209 aa).

Belongs to the NRP synthetase family.

Functionally, nonribosomal peptide synthetase that catalyzes the biosynthesis of the hydrophobic cyclopentapeptides malpibaldins, natural products that show biosurfactant activities. Module 3 shows promiscuous adenylation (accepting either Trp, Phe or Tyr) leading to the parallel production of multiple products from one NRPS assembly line, including malpibaldin A corresponding to cyclo(-L-Leu-D-Leu-D-Phe-L-Leu-D-Val-), malpibaldin B corresponding to cyclo(-L-Leu-D-Leu-D-Tyr-L-Leu-D-Val-) and malpibaldin C corresponding to cyclo(-Leu-Leu-Trp-Leu-Val-). This chain is Malpibaldin synthetase, found in Mortierella alpina (Oleaginous fungus).